The chain runs to 308 residues: Membrane protein insertase YidC 1 (308 aa).

Residues 1–22 (MKSIKRFALSAMGVAMLLVLTG) form the signal peptide. Residue C23 is the site of N-palmitoyl cysteine attachment. C23 carries S-diacylglycerol cysteine lipidation. Transmembrane regions (helical) follow at residues 60 to 80 (FGVA…PLGI), 135 to 155 (FGGV…AIYF), 168 to 188 (YLGI…GVLY), 211 to 226 (MIYM…SLFS), and 232 to 252 (LYWV…NYIV). Residues 263-308 (ELAKNPPKASAFSKPSGRKDVTPEQPTAITSKKKHKNRNAGKQRSR) are disordered. Positions 293–308 (SKKKHKNRNAGKQRSR) are enriched in basic residues.

It belongs to the OXA1/ALB3/YidC family. Type 2 subfamily.

It localises to the cell membrane. Its function is as follows. Required for the insertion and/or proper folding and/or complex formation of integral membrane proteins into the membrane. Involved in integration of membrane proteins that insert both dependently and independently of the Sec translocase complex, as well as at least some lipoproteins. The polypeptide is Membrane protein insertase YidC 1 (Streptococcus pneumoniae serotype 4 (strain ATCC BAA-334 / TIGR4)).